The primary structure comprises 229 residues: 23 kDa piroplasm membrane protein (229 aa).

A signal peptide spans 1 to 19; sequence MNKYFKVFFFVLLTHALKS. The Extracellular portion of the chain corresponds to 20-203; that stretch reads ALIFGQATLQ…EKEDTNKKKY (184 aa). The helical transmembrane segment at 204 to 224 threads the bilayer; sequence VLMVVVVVVFVVVASLVVFLV. Residues 225–229 are Cytoplasmic-facing; it reads KFCLK.

Its subcellular location is the membrane. The sequence is that of 23 kDa piroplasm membrane protein from Theileria parva (East coast fever infection agent).